A 314-amino-acid chain; its full sequence is Methionyl-tRNA formyltransferase (314 aa).

Position 113–116 (113–116 (SLLP)) interacts with (6S)-5,6,7,8-tetrahydrofolate.

The protein belongs to the Fmt family.

It carries out the reaction L-methionyl-tRNA(fMet) + (6R)-10-formyltetrahydrofolate = N-formyl-L-methionyl-tRNA(fMet) + (6S)-5,6,7,8-tetrahydrofolate + H(+). Attaches a formyl group to the free amino group of methionyl-tRNA(fMet). The formyl group appears to play a dual role in the initiator identity of N-formylmethionyl-tRNA by promoting its recognition by IF2 and preventing the misappropriation of this tRNA by the elongation apparatus. The sequence is that of Methionyl-tRNA formyltransferase from Ectopseudomonas mendocina (strain ymp) (Pseudomonas mendocina).